Here is a 639-residue protein sequence, read N- to C-terminus: Serine protease HtrA-like (639 aa).

Composition is skewed to basic and acidic residues over residues M1–Q13, Y21–Q75, Q106–S187, and K195–K205. The tract at residues M1–T262 is disordered. Residues A206–Y219 show a composition bias toward polar residues. Basic and acidic residues-rich tracts occupy residues T220 to K235 and N245 to T262. Residues I277 to M297 traverse the membrane as a helical segment. Catalysis depends on charge relay system residues H374, D404, and S489. In terms of domain architecture, PDZ spans E527–G629.

This sequence belongs to the peptidase S1C family.

The protein resides in the cell membrane. In Staphylococcus haemolyticus (strain JCSC1435), this protein is Serine protease HtrA-like.